A 199-amino-acid chain; its full sequence is Holliday junction branch migration complex subunit RuvA (199 aa).

The interval 1–63 is domain I; that stretch reads MIDYIKGNLV…EDSQRLFGFT (63 aa). Residues 64–142 are domain II; it reads TRTERLLFEK…DMAPMLEPAA (79 aa). Positions 143 to 153 are flexible linker; the sequence is GADKQQKNPQL. The segment at 153 to 199 is domain III; sequence LEDALEALRALGYVEKELKKVEKQLKAETLETDEYIRRALALMLKRP.

The protein belongs to the RuvA family. Homotetramer. Forms an RuvA(8)-RuvB(12)-Holliday junction (HJ) complex. HJ DNA is sandwiched between 2 RuvA tetramers; dsDNA enters through RuvA and exits via RuvB. An RuvB hexamer assembles on each DNA strand where it exits the tetramer. Each RuvB hexamer is contacted by two RuvA subunits (via domain III) on 2 adjacent RuvB subunits; this complex drives branch migration. In the full resolvosome a probable DNA-RuvA(4)-RuvB(12)-RuvC(2) complex forms which resolves the HJ.

The protein localises to the cytoplasm. In terms of biological role, the RuvA-RuvB-RuvC complex processes Holliday junction (HJ) DNA during genetic recombination and DNA repair, while the RuvA-RuvB complex plays an important role in the rescue of blocked DNA replication forks via replication fork reversal (RFR). RuvA specifically binds to HJ cruciform DNA, conferring on it an open structure. The RuvB hexamer acts as an ATP-dependent pump, pulling dsDNA into and through the RuvAB complex. HJ branch migration allows RuvC to scan DNA until it finds its consensus sequence, where it cleaves and resolves the cruciform DNA. The sequence is that of Holliday junction branch migration complex subunit RuvA from Shouchella clausii (strain KSM-K16) (Alkalihalobacillus clausii).